Consider the following 355-residue polypeptide: Putative [LysW]-L-2-aminoadipate/[LysW]-L-glutamate phosphate reductase (355 aa).

Position 13–16 (13–16 (SGMT)) interacts with NADP(+). Residue cysteine 153 is part of the active site. Asparagine 323 lines the NADP(+) pocket.

Belongs to the NAGSA dehydrogenase family. Type 1 subfamily. LysY sub-subfamily.

It is found in the cytoplasm. It carries out the reaction [amino-group carrier protein]-C-terminal-N-(1-carboxy-5-oxopentan-1-yl)-L-glutamine + phosphate + NADP(+) = [amino-group carrier protein]-C-terminal-N-(1-carboxy-5-phosphooxy-5-oxopentan-1-yl)-L-glutamine + NADPH + H(+). The catalysed reaction is [amino-group carrier protein]-C-terminal-gamma-(L-glutamyl-5-semialdehyde)-L-glutamate + phosphate + NADP(+) = [amino-group carrier protein]-C-terminal-gamma-(5-phospho-L-glutamyl)-L-glutamate + NADPH + H(+). The protein operates within amino-acid biosynthesis; L-lysine biosynthesis via AAA pathway; L-lysine from L-alpha-aminoadipate (Thermus route): step 3/5. Its pathway is amino-acid biosynthesis; L-arginine biosynthesis. Functionally, involved in both the arginine and lysine biosynthetic pathways. This chain is Putative [LysW]-L-2-aminoadipate/[LysW]-L-glutamate phosphate reductase, found in Aeropyrum pernix (strain ATCC 700893 / DSM 11879 / JCM 9820 / NBRC 100138 / K1).